Consider the following 287-residue polypeptide: GPN-loop GTPase 3 (287 aa).

12 to 17 is a binding site for GTP; that stretch reads GAGKST. The Gly-Pro-Asn (GPN)-loop; involved in dimer interface motif lies at 69–71; that stretch reads GPN. 172-175 provides a ligand contact to GTP; that stretch reads SKMD.

Belongs to the GPN-loop GTPase family. As to quaternary structure, heterodimers with GPN1 or GPN2. Binds to RNA polymerase II (RNAPII).

Functionally, small GTPase required for proper nuclear import of RNA polymerase II and III (RNAPII and RNAPIII). May act at an RNAP assembly step prior to nuclear import. The sequence is that of GPN-loop GTPase 3 from Cryptococcus neoformans var. neoformans serotype D (strain B-3501A) (Filobasidiella neoformans).